The following is a 91-amino-acid chain: Small ribosomal subunit protein uS19 (91 aa).

The protein belongs to the universal ribosomal protein uS19 family.

Functionally, protein S19 forms a complex with S13 that binds strongly to the 16S ribosomal RNA. The chain is Small ribosomal subunit protein uS19 from Azoarcus sp. (strain BH72).